We begin with the raw amino-acid sequence, 238 residues long: MRADMSVTSMLDREVYVYAEVDKLIGLPAGTAKRWINGYERGGKDHPPILRVTPGATPWVTWGEFVETRMLAEYRDRRKVPIVRQRAAIEELRARFNLRYPLAHLRPFLSTHERDLTMGGEEIGLPDAEVTIRTGQALLGDARWLASIATPGRDEVGEAVIVELPVDKAFPEIVINPSRYSGQPTFVGRRVSPVTIAQMVDGGEEREDLAADYGLSLKQIQDAIDYTKKYRLARLVAA.

This is an uncharacterized protein from Mycobacterium tuberculosis (strain ATCC 25618 / H37Rv).